The chain runs to 129 residues: uncharacterized protein (129 aa).

A disordered region spans residues 1-129 (MWLWQDIQCC…HTSNGRTGDL (129 aa)). Positions 87-100 (KGADTRRLPRETRP) are enriched in basic and acidic residues. A compositionally biased stretch (polar residues) spans 119–129 (PHTSNGRTGDL).

This is an uncharacterized protein from Homo sapiens (Human).